An 86-amino-acid polypeptide reads, in one-letter code: Small ribosomal subunit protein bS20 (86 aa).

The tract at residues 1–26 (MANIKSAKKRAITSEKRRQHNASRRS) is disordered.

Belongs to the bacterial ribosomal protein bS20 family.

In terms of biological role, binds directly to 16S ribosomal RNA. The protein is Small ribosomal subunit protein bS20 of Photobacterium profundum (strain SS9).